Consider the following 208-residue polypeptide: Small ribosomal subunit protein uS4 (208 aa).

Residues 95 to 159 enclose the S4 RNA-binding domain; that stretch reads RRIDNIVYRA…FKKLVRSNIE (65 aa).

It belongs to the universal ribosomal protein uS4 family. As to quaternary structure, part of the 30S ribosomal subunit. Contacts protein S5. The interaction surface between S4 and S5 is involved in control of translational fidelity.

Functionally, one of the primary rRNA binding proteins, it binds directly to 16S rRNA where it nucleates assembly of the body of the 30S subunit. In terms of biological role, with S5 and S12 plays an important role in translational accuracy. This chain is Small ribosomal subunit protein uS4, found in Borrelia recurrentis (strain A1).